The chain runs to 296 residues: ADP-forming sulfoacetate-CoA ligase subunit SqwL (296 aa).

CoA is bound by residues Thr17–Glu20, Lys43, and Ile96–Asp98. Catalysis depends on His251, which acts as the Tele-phosphohistidine intermediate.

The protein belongs to the succinate/malate CoA ligase alpha subunit family. As to quaternary structure, forms a complex with SqwK.

The enzyme catalyses sulfoacetate + ATP + CoA = sulfoacetyl-CoA + ADP + phosphate. Part of a variant of the sulfo-TK pathway, a D-sulfoquinovose degradation pathway that produces sulfoacetate. Hydrolyzes sulfoacetyl-coenzyme A (sulfoacetyl-CoA) to produce sulfoacetate and CoA coupled with the phosphorylation of ADP to generate ATP. Cannot use succinate, acetate or 3-hydroxypropionate, and shows only residual activities with malonate and 3-sulfopropanoate. In Acholeplasma sp, this protein is ADP-forming sulfoacetate-CoA ligase subunit SqwL.